Reading from the N-terminus, the 260-residue chain is Carbonic anhydrase 3 (260 aa).

N-acetylalanine is present on Ala-2. Positions 3–259 (KEWGYADHNG…LKGRVVRASF (257 aa)) constitute an Alpha-carbonic anhydrase domain. Phosphoserine occurs at positions 29, 43, 50, and 55. An involved in proton transfer region spans residues 64-67 (RTCR). Phosphothreonine is present on Thr-73. His-94, His-96, and His-119 together coordinate Zn(2+). Tyr-127 is subject to Phosphotyrosine. Residues Thr-129 and Thr-176 each carry the phosphothreonine modification. 2 positions are modified to S-glutathionyl cysteine: Cys-182 and Cys-187. 198–199 (TT) is a binding site for substrate. Thr-216 is subject to Phosphothreonine. Ser-219 is modified (phosphoserine).

Belongs to the alpha-carbonic anhydrase family. The cofactor is Zn(2+). In terms of processing, S-thiolated both by thiol-disulfide exchange with glutathione disulfide and by oxyradical-initiated S-thiolation with reduced glutathione. S-glutathionylated in hepatocytes under oxidative stress.

It localises to the cytoplasm. The catalysed reaction is hydrogencarbonate + H(+) = CO2 + H2O. Inhibited by acetazolamide. Its function is as follows. Reversible hydration of carbon dioxide. This chain is Carbonic anhydrase 3 (CA3), found in Equus caballus (Horse).